The primary structure comprises 396 residues: Elongation factor Tu (396 aa).

The 197-residue stretch at 10–206 (KPHCNIGTIG…AVDAYIPQPE (197 aa)) folds into the tr-type G domain. Residues 19 to 26 (GHVDHGKT) form a G1 region. 19 to 26 (GHVDHGKT) is a binding site for GTP. T26 lines the Mg(2+) pocket. Residues 60-64 (GITIS) form a G2 region. Residues 81 to 84 (DCPG) form a G3 region. GTP is bound by residues 81–85 (DCPGH) and 136–139 (NKCD). Residues 136–139 (NKCD) are G4. A G5 region spans residues 174 to 176 (SAL).

This sequence belongs to the TRAFAC class translation factor GTPase superfamily. Classic translation factor GTPase family. EF-Tu/EF-1A subfamily. In terms of assembly, monomer.

Its subcellular location is the cytoplasm. It catalyses the reaction GTP + H2O = GDP + phosphate + H(+). Its function is as follows. GTP hydrolase that promotes the GTP-dependent binding of aminoacyl-tRNA to the A-site of ribosomes during protein biosynthesis. The protein is Elongation factor Tu of Rhodopseudomonas palustris (strain BisB18).